The sequence spans 526 residues: Thymocyte selection-associated high mobility group box protein TOX (526 aa).

2 disordered regions span residues 138 to 178 (MPDI…PHGQ) and 192 to 264 (GLNM…PQKP). Over residues 192-203 (GLNMGGSNVPHN) the composition is skewed to polar residues. The segment covering 209 to 220 (GSKSATPSPSSS) has biased composition (low complexity). The span at 228 to 245 (DTSKINGGEKRPASDMGK) shows a compositional bias: basic and acidic residues. Positions 237-256 (KRPASDMGKKPKTPKKKKKK) match the Nuclear localization signal motif. Residues 246-256 (KPKTPKKKKKK) are compositionally biased toward basic residues. A DNA-binding region (HMG box) is located at residues 261 to 329 (PQKPVSAYAL…EYLKQLAAYR (69 aa)).

This sequence belongs to the high motility group (HMG) box superfamily. In terms of assembly, interacts with HBO1 complex composed at least of KAT7/HBO1, ING4, MEAF6, and JADE2; this complex is involved in histone acetylation. Interacts with DNMT1, LEO1, PAF1, SAP130 and SIN3A; these interactors regulate chromatin remodeling. Interacts with an array of proteins involved in RNA processing and translation and DNA replication. In terms of tissue distribution, expressed in NK cells. Highly expressed in tumor-infiltrating CD8-positive T cells (at protein level).

The protein resides in the nucleus. Functionally, transcriptional regulator with a major role in neural stem cell commitment and corticogenesis as well as in lymphoid cell development and lymphoid tissue organogenesis. Binds to GC-rich DNA sequences in the proximity of transcription start sites and may alter chromatin structure, modifying access of transcription factors to DNA. During cortical development, controls the neural stem cell pool by inhibiting the switch from proliferative to differentiating progenitors. Beyond progenitor cells, promotes neurite outgrowth in newborn neurons migrating to reach the cortical plate. May activate or repress critical genes for neural stem cell fate such as SOX2, EOMES and ROBO2. Plays an essential role in the development of lymphoid tissue-inducer (LTi) cells, a subset necessary for the formation of secondary lymphoid organs: peripheral lymph nodes and Peyer's patches. Acts as a developmental checkpoint and regulates thymocyte positive selection toward T cell lineage commitment. Required for the development of various T cell subsets, including CD4-positive helper T cells, CD8-positive cytotoxic T cells, regulatory T cells and CD1D-dependent natural killer T (NKT) cells. Required for the differentiation of common lymphoid progenitors (CMP) to innate lymphoid cells (ILC). May regulate the NOTCH-mediated gene program, promoting differentiation of the ILC lineage. Required at the progenitor phase of NK cell development in the bone marrow to specify NK cell lineage commitment. Upon chronic antigen stimulation, diverts T cell development by promoting the generation of exhaustive T cells, while suppressing effector and memory T cell programming. May regulate the expression of genes encoding inhibitory receptors such as PDCD1 and induce the exhaustion program, to prevent the overstimulation of T cells and activation-induced cell death. In Homo sapiens (Human), this protein is Thymocyte selection-associated high mobility group box protein TOX.